The sequence spans 138 residues: Small ribosomal subunit protein uS11c (138 aa).

The segment at 1–22 is disordered; the sequence is MAKAIPKISSRRNGRIGSRKGA. The span at 9-22 shows a compositional bias: basic residues; the sequence is SSRRNGRIGSRKGA.

It belongs to the universal ribosomal protein uS11 family. As to quaternary structure, part of the 30S ribosomal subunit.

The protein resides in the plastid. Its subcellular location is the chloroplast. The sequence is that of Small ribosomal subunit protein uS11c from Nicotiana tabacum (Common tobacco).